Reading from the N-terminus, the 744-residue chain is Spalt-like protein sem-4 (744 aa).

The disordered stretch occupies residues 6–32; it reads AEMAAVSSRRKQSKPRRMSGEGDAMMS. The segment covering 13 to 22 has biased composition (basic residues); it reads SRRKQSKPRR. 4 C2H2-type zinc fingers span residues 99–124, 305–327, 333–355, and 411–433; these read SSCP…LDAH, NQCI…YRTH, FKCK…MGVH, and QQCP…ITEH. Positions 487–497 are enriched in polar residues; sequence KNDSSPNTDTS. Disordered regions lie at residues 487-530 and 542-562; these read KNDS…RQDI and KLEE…PKNE. Residues 499-509 show a composition bias toward basic and acidic residues; it reads VEEKITRDDPP. A compositionally biased stretch (low complexity) spans 513–525; it reads SLSPSNSSDSSSS. Positions 551–561 are enriched in polar residues; it reads QQVSTTPNPKN. 3 consecutive C2H2-type zinc fingers follow at residues 589–611, 617–639, and 701–723; these read HQCG…MRTH, FKCD…MGTH, and TVCS…LKEH. The segment at 725–744 is disordered; that stretch reads NNGSSAAPTPLASAATPPPS. Low complexity predominate over residues 728 to 744; the sequence is SSAAPTPLASAATPPPS.

This sequence belongs to the sal C2H2-type zinc-finger protein family.

It localises to the nucleus. In terms of biological role, transcription factor, involved in positive and negative modulation of transcription. Binds to multiple DNA sequence motifs in the regulatory elements of target genes, including homeobox selector egl-5 and LIM homeobox mec-3. Involved in cell-fate regulation in multiple lineages, including neuronal, mesodermal and vulval. Required to regulate the fate of PLM touch receptor neurons, acting via negative modulation of transcription of egl-5 and mec-3. May modulate gene expression by interacting with different transcription factors during neuronal and mesodermal cell development. Promotes the proliferative sex myoblast (SM) fate, in a cell autonomous manner, acting via the SoxC transcription factor sem-2. Involved in vulval cell-fate determination, acting by regulating expression of homeobox protein lin-39, and may link lin-39 to incoming signaling pathways. Plays a role in detoxification of reactive oxygen species (ROS), by regulating expression of transcription factor skn-1 and the phase II detoxification genes. The sequence is that of Spalt-like protein sem-4 from Caenorhabditis elegans.